The sequence spans 658 residues: A-type ATP synthase subunit I (658 aa).

7 helical membrane-spanning segments follow: residues methionine 383 to isoleucine 403, isoleucine 427 to isoleucine 447, isoleucine 475 to alanine 495, alanine 507 to valine 526, isoleucine 530 to leucine 552, leucine 568 to leucine 588, and glutamate 591 to alanine 611.

The protein belongs to the V-ATPase 116 kDa subunit family. As to quaternary structure, has multiple subunits with at least A(3), B(3), C, D, E, F, H, I and proteolipid K(x).

The protein localises to the cell membrane. In terms of biological role, component of the A-type ATP synthase that produces ATP from ADP in the presence of a proton gradient across the membrane. In Methanothermobacter thermautotrophicus (strain ATCC 29096 / DSM 1053 / JCM 10044 / NBRC 100330 / Delta H) (Methanobacterium thermoautotrophicum), this protein is A-type ATP synthase subunit I.